Consider the following 84-residue polypeptide: Small ribosomal subunit protein uS17 (84 aa).

The protein belongs to the universal ribosomal protein uS17 family. As to quaternary structure, part of the 30S ribosomal subunit.

Its function is as follows. One of the primary rRNA binding proteins, it binds specifically to the 5'-end of 16S ribosomal RNA. This Nitrosomonas europaea (strain ATCC 19718 / CIP 103999 / KCTC 2705 / NBRC 14298) protein is Small ribosomal subunit protein uS17.